A 368-amino-acid polypeptide reads, in one-letter code: N-acetylneuraminate epimerase (368 aa).

Residues 1–19 (MNKTIMALAIMMASFAANA) form the signal peptide. 7 Kelch repeats span residues 40-84 (TVYI…AFID), 86-137 (NLYV…FVHN), 139-173 (KAYV…KINA), 174-219 (HYFD…VNKG), 222-265 (TWLI…VAGG), 287-336 (ENYQ…PWNN), and 338-367 (LLII…VTVQ). The active-site Proton acceptor is Glu228.

It belongs to the NanM family. In terms of assembly, homodimer.

It localises to the periplasm. The catalysed reaction is N-acetyl-alpha-neuraminate = N-acetyl-beta-neuraminate. Its function is as follows. Converts alpha-N-acetylneuranimic acid (Neu5Ac) to the beta-anomer, accelerating the equilibrium between the alpha- and beta-anomers. Probably facilitates sialidase-negative bacteria to compete successfully for limited amounts of extracellular Neu5Ac, which is likely taken up in the beta-anomer. In addition, the rapid removal of sialic acid from solution might be advantageous to the bacterium to damp down host responses. This Shigella sonnei (strain Ss046) protein is N-acetylneuraminate epimerase.